The following is a 49-amino-acid chain: Large ribosomal subunit protein eL40 (49 aa).

Belongs to the eukaryotic ribosomal protein eL40 family.

The sequence is that of Large ribosomal subunit protein eL40 from Methanosarcina barkeri (strain Fusaro / DSM 804).